The sequence spans 448 residues: Probable D-serine dehydratase (448 aa).

Lys119 is modified (N6-(pyridoxal phosphate)lysine).

Belongs to the serine/threonine dehydratase family. DsdA subfamily. Pyridoxal 5'-phosphate serves as cofactor.

The enzyme catalyses D-serine = pyruvate + NH4(+). This is Probable D-serine dehydratase from Pseudomonas paraeruginosa (strain DSM 24068 / PA7) (Pseudomonas aeruginosa (strain PA7)).